Consider the following 196-residue polypeptide: Holliday junction branch migration complex subunit RuvA (196 aa).

The tract at residues 1 to 63 is domain I; that stretch reads MISFVSGRVA…EDSLTLYGFA (63 aa). Residues 64 to 136 form a domain II region; that stretch reads DDDERTVFEL…LKDRLGTPST (73 aa). Residues 136–140 are flexible linker; the sequence is TAAAE. The tract at residues 141 to 196 is domain III; that stretch reads STSGWRDAVHAGLLNLGYTARQADEAIAAIAGELDDSAAVDTATALRLALATLKRP.

This sequence belongs to the RuvA family. As to quaternary structure, homotetramer. Forms an RuvA(8)-RuvB(12)-Holliday junction (HJ) complex. HJ DNA is sandwiched between 2 RuvA tetramers; dsDNA enters through RuvA and exits via RuvB. An RuvB hexamer assembles on each DNA strand where it exits the tetramer. Each RuvB hexamer is contacted by two RuvA subunits (via domain III) on 2 adjacent RuvB subunits; this complex drives branch migration. In the full resolvosome a probable DNA-RuvA(4)-RuvB(12)-RuvC(2) complex forms which resolves the HJ.

The protein localises to the cytoplasm. In terms of biological role, the RuvA-RuvB-RuvC complex processes Holliday junction (HJ) DNA during genetic recombination and DNA repair, while the RuvA-RuvB complex plays an important role in the rescue of blocked DNA replication forks via replication fork reversal (RFR). RuvA specifically binds to HJ cruciform DNA, conferring on it an open structure. The RuvB hexamer acts as an ATP-dependent pump, pulling dsDNA into and through the RuvAB complex. HJ branch migration allows RuvC to scan DNA until it finds its consensus sequence, where it cleaves and resolves the cruciform DNA. The protein is Holliday junction branch migration complex subunit RuvA of Acidothermus cellulolyticus (strain ATCC 43068 / DSM 8971 / 11B).